Here is a 791-residue protein sequence, read N- to C-terminus: Diacylglycerol kinase gamma (791 aa).

Disordered stretches follow at residues 82 to 103 (KPRH…ANSA) and 117 to 154 (DEAC…SSSS). The segment covering 83-92 (PRHETSDHPT) has biased composition (basic and acidic residues). The segment covering 94 to 103 (GASNSEANSA) has biased composition (polar residues). EF-hand domains are found at residues 175 to 210 (RPQD…MLHI) and 220 to 255 (ELRP…TIPL). Ca(2+) is bound by residues Asp188, Asp190, Asn192, Glu199, Asp233, Asp235, Asp237, and Glu244. Phorbol-ester/DAG-type zinc fingers lie at residues 271-321 (RHAW…IPGC) and 336-385 (QHAW…LCDG). The DAGKc domain maps to 430–564 (PGTHPLLVLV…LDRWHLEVIP (135 aa)). The segment at 768 to 791 (APMMMGPPQKSSFFSLRRKSRSKD) is disordered.

Belongs to the eukaryotic diacylglycerol kinase family. In terms of tissue distribution, predominantly expressed in retina and in a much lesser extent in the brain. Other tissues contain extremely low levels of DGK-gamma.

It is found in the membrane. The protein localises to the cytoplasm. It localises to the cytosol. The protein resides in the cytoskeleton. The enzyme catalyses a 1,2-diacyl-sn-glycerol + ATP = a 1,2-diacyl-sn-glycero-3-phosphate + ADP + H(+). The catalysed reaction is 1,2-didecanoyl-sn-glycerol + ATP = 1,2-didecanoyl-sn-glycero-3-phosphate + ADP + H(+). It catalyses the reaction 1-octadecanoyl-2-(5Z,8Z,11Z,14Z-eicosatetraenoyl)-sn-glycerol + ATP = 1-octadecanoyl-2-(5Z,8Z,11Z,14Z-eicosatetraenoyl)-sn-glycero-3-phosphate + ADP + H(+). It carries out the reaction 1,2-di-(9Z-octadecenoyl)-sn-glycerol + ATP = 1,2-di-(9Z-octadecenoyl)-sn-glycero-3-phosphate + ADP + H(+). The enzyme catalyses 1-octadecanoyl-2-(9Z,12Z)-octadecadienoyl-sn-glycerol + ATP = 1-octadecanoyl-2-(9Z,12Z-octadecadienoyl)-sn-glycero-3-phosphate + ADP + H(+). The protein operates within lipid metabolism; glycerolipid metabolism. The activity is calcium-dependent. Requires phosphatidylserine for maximal activity. Diacylglycerol kinase that converts diacylglycerol/DAG into phosphatidic acid/phosphatidate/PA and regulates the respective levels of these two bioactive lipids. Thereby, acts as a central switch between the signaling pathways activated by these second messengers with different cellular targets and opposite effects in numerous biological processes. Has no apparent specificity with regard to the acyl compositions of diacylglycerol. Specifically expressed in the cerebellum where it controls the level of diacylglycerol which in turn regulates the activity of protein kinase C gamma. Through protein kinase C gamma, indirectly regulates the dendritic development of Purkinje cells, cerebellar long term depression and ultimately cerebellar motor coordination. The polypeptide is Diacylglycerol kinase gamma (DGKG) (Homo sapiens (Human)).